A 67-amino-acid polypeptide reads, in one-letter code: Mitotic-spindle organizing protein 1A (67 aa).

The protein belongs to the MOZART1 family. As to quaternary structure, part of the gamma-tubulin complex. Interacts with GIP1 and GCP3. In terms of tissue distribution, mostly expressed in siliques and flowers, and, to a lower extent, in leaves, roots and seedlings, with highest levels in young tissues, meristematic cells, and the vasculature.

It is found in the cytoplasm. It localises to the cytoskeleton. The protein resides in the microtubule organizing center. Its subcellular location is the spindle. The protein localises to the nucleus. It is found in the phragmoplast. It localises to the nucleus envelope. Its function is as follows. Required for gamma-tubulin complex recruitment to the microtubule organizing centers (MTOCs). During mitosis, modulates gamma-tubulin complex localization, spindle stability and chromosomal segregation. Necessary for gametophyte development and embryogenesis. The chain is Mitotic-spindle organizing protein 1A (GIP2) from Arabidopsis thaliana (Mouse-ear cress).